Here is a 323-residue protein sequence, read N- to C-terminus: Viral cathepsin (323 aa).

A signal peptide spans 1-16; that stretch reads MNKILFYLFVYGVVNS. The propeptide at 17–112 is activation peptide; the sequence is AAYDLLKAPN…IVLDQPPGKG (96 aa). 3 disulfides stabilise this stretch: C133/C174, C167/C207, and C262/C310. C136 is an active-site residue. Residue N158 is glycosylated (N-linked (GlcNAc...) asparagine; by host). Active-site residues include H269 and N289.

This sequence belongs to the peptidase C1 family. Post-translationally, synthesized as an inactive proenzyme and activated by proteolytic removal of the inhibitory propeptide.

It carries out the reaction Endopeptidase of broad specificity, hydrolyzing substrates of both cathepsin L and cathepsin B.. Cysteine protease that plays an essential role in host liquefaction to facilitate horizontal transmission of the virus. May participate in the degradation of foreign protein expressed by the baculovirus system. This Helicoverpa zea (Corn earworm moth) protein is Viral cathepsin (VCATH).